The sequence spans 64 residues: Large ribosomal subunit protein bL32 (64 aa).

It belongs to the bacterial ribosomal protein bL32 family.

The protein is Large ribosomal subunit protein bL32 of Mycoplasma mobile (strain ATCC 43663 / 163K / NCTC 11711) (Mesomycoplasma mobile).